A 209-amino-acid polypeptide reads, in one-letter code: Small ribosomal subunit protein uS4 (209 aa).

One can recognise an S4 RNA-binding domain in the interval 99–164 (GRLDSVVYRM…QLRVKAALEA (66 aa)).

This sequence belongs to the universal ribosomal protein uS4 family. Part of the 30S ribosomal subunit. Contacts protein S5. The interaction surface between S4 and S5 is involved in control of translational fidelity.

In terms of biological role, one of the primary rRNA binding proteins, it binds directly to 16S rRNA where it nucleates assembly of the body of the 30S subunit. Its function is as follows. With S5 and S12 plays an important role in translational accuracy. In Aromatoleum aromaticum (strain DSM 19018 / LMG 30748 / EbN1) (Azoarcus sp. (strain EbN1)), this protein is Small ribosomal subunit protein uS4.